The chain runs to 160 residues: SsrA-binding protein (160 aa).

It belongs to the SmpB family.

Its subcellular location is the cytoplasm. Its function is as follows. Required for rescue of stalled ribosomes mediated by trans-translation. Binds to transfer-messenger RNA (tmRNA), required for stable association of tmRNA with ribosomes. tmRNA and SmpB together mimic tRNA shape, replacing the anticodon stem-loop with SmpB. tmRNA is encoded by the ssrA gene; the 2 termini fold to resemble tRNA(Ala) and it encodes a 'tag peptide', a short internal open reading frame. During trans-translation Ala-aminoacylated tmRNA acts like a tRNA, entering the A-site of stalled ribosomes, displacing the stalled mRNA. The ribosome then switches to translate the ORF on the tmRNA; the nascent peptide is terminated with the 'tag peptide' encoded by the tmRNA and targeted for degradation. The ribosome is freed to recommence translation, which seems to be the essential function of trans-translation. This Marinobacter nauticus (strain ATCC 700491 / DSM 11845 / VT8) (Marinobacter aquaeolei) protein is SsrA-binding protein.